A 123-amino-acid chain; its full sequence is Undecaprenol kinase (123 aa).

Residues 1–33 (MDSKDHRNELNRFFKSFVHAGRGIWETARTERN) lie on the Cytoplasmic side of the membrane. A helical membrane pass occupies residues 34–51 (FQFHAAAACAVLICGFLV). The Extracellular portion of the chain corresponds to 52–57 (ELSIIE). A helical membrane pass occupies residues 58–74 (WMIIFLLIGGMFSLELL). Over 75–99 (NTAIEHTVDLITDKHHPLAKAAKDA) the chain is Cytoplasmic. The chain crosses the membrane as a helical span at residues 100–120 (AAGAVCVFAVISCIIGLLIFL). Residues 121–123 (PKL) lie on the Extracellular side of the membrane.

This sequence belongs to the bacterial diacylglycerol kinase family.

The protein localises to the cell membrane. It catalyses the reaction di-trans,octa-cis-undecaprenol + ATP = di-trans,octa-cis-undecaprenyl phosphate + ADP + H(+). Functionally, catalyzes the phosphorylation of undecaprenol in vitro, which is probably the physiological substrate. Exhibits no detectable activity against other substrates such as monoacylglycerol, ceramide, or diacylglycerol (DAG). Appears indispensable for the maintenance of spore stability and viability in B.subtilis. The polypeptide is Undecaprenol kinase (dgkA) (Bacillus subtilis (strain 168)).